A 219-amino-acid chain; its full sequence is Ras-related protein Rab-3 (219 aa).

Residues 29–37, 48–54, 77–81, 135–138, and 165–167 each bind GTP; these read GNSSVGKTS, TSAFVST, DTAGQ, NKCD, and SAK. An Effector region motif is present at residues 51-59; that stretch reads FVSTVGIDF. Residues 191–219 are disordered; it reads LDKDPQQQPKGQKLEANPTQKPAQQQCNC. Residues 207–219 are compositionally biased toward polar residues; the sequence is NPTQKPAQQQCNC. S-geranylgeranyl cysteine attachment occurs at residues C217 and C219. C219 is subject to Cysteine methyl ester.

This sequence belongs to the small GTPase superfamily. Rab family.

The protein localises to the cell membrane. Functionally, involved in exocytosis by regulating a late step in synaptic vesicle fusion. Could play a role in neurotransmitter release by regulating membrane flow in the nerve terminal. Plays a role in the recruitment of endophilin unc-57 to synaptic vesicles. Probably by controlling dense-core vesicle trafficking, plays a role in the AVG neuron-mediated formation of the right axon tract of the ventral nerve cord. This Caenorhabditis elegans protein is Ras-related protein Rab-3 (rab-3).